An 882-amino-acid chain; its full sequence is Bifunctional heparan sulfate N-deacetylase/N-sulfotransferase 1 (882 aa).

The Cytoplasmic portion of the chain corresponds to 1–17 (MPALACLRRLCRHLSPQ). A sufficient for localization to Golgi membrane region spans residues 1-169 (MPALACLRRL…VAYGVGIIGF (169 aa)). A helical; Signal-anchor for type II membrane protein transmembrane segment spans residues 18 to 38 (AVLFLLFVFCLFSVFVSAYYL). At 39–882 (YGWNRGLEPS…WLREDLQNTR (844 aa)) the chain is on the lumenal side. The segment at 40–598 (GWNRGLEPSA…KRHKDIWSKE (559 aa)) is heparan sulfate N-deacetylase 1. 3 N-linked (GlcNAc...) asparagine glycosylation sites follow: asparagine 231, asparagine 351, and asparagine 401. The tract at residues 599 to 882 (KTCDRFPKLL…WLREDLQNTR (284 aa)) is heparan sulfate N-sulfotransferase 1. Lysine 614 acts as the For sulfotransferase activity in catalysis. 614 to 618 (KTGTT) contacts adenosine 3',5'-bisphosphate. Asparagine 667 carries N-linked (GlcNAc...) asparagine glycosylation. Residues serine 712 and tryptophan 817 each contribute to the adenosine 3',5'-bisphosphate site. Residues cysteine 818 and cysteine 828 are joined by a disulfide bond. 833–837 (KGRKY) provides a ligand contact to adenosine 3',5'-bisphosphate.

It belongs to the sulfotransferase 1 family. NDST subfamily. In terms of assembly, monomer. Interacts with heparan sulfate co-polymerase subunits EXT1 and EXT2. In terms of tissue distribution, widely expressed in adult and throughout development.

It is found in the golgi apparatus membrane. It localises to the golgi apparatus. The protein resides in the trans-Golgi network membrane. The protein localises to the cis-Golgi network membrane. It catalyses the reaction N-acetyl-alpha-D-glucosaminyl-[heparan sulfate](n) + H2O = alpha-D-glucosaminyl-[heparan sulfate](n) + acetate. It carries out the reaction alpha-D-glucosaminyl-[heparan sulfate](n) + 3'-phosphoadenylyl sulfate = N-sulfo-alpha-D-glucosaminyl-[heparan sulfate](n) + adenosine 3',5'-bisphosphate + 2 H(+). It participates in glycan metabolism; heparan sulfate biosynthesis. It functions in the pathway glycan metabolism; heparin biosynthesis. Its activity is regulated as follows. Inhibited by long N-sulfated sequences (more than 6 sugar residues) accumulating in its substrates heparan sulfate, and heparin. Functionally, essential bifunctional enzyme that catalyzes both the N-deacetylation and the N-sulfation of glucosamine (GlcNAc) of the glycosaminoglycan in heparan sulfate. Modifies the GlcNAc-GlcA disaccharide repeating sugar backbone to make N-sulfated heparosan, a prerequisite substrate for later modifications in heparin biosynthesis. Plays a role in determining the extent and pattern of sulfation of heparan sulfate. Participates in biosynthesis of heparan sulfate that can ultimately serve as L-selectin ligands, thereby playing a role in inflammatory response. Required for the exosomal release of SDCBP, CD63 and syndecan. The chain is Bifunctional heparan sulfate N-deacetylase/N-sulfotransferase 1 from Mus musculus (Mouse).